The primary structure comprises 347 residues: Quinolinate synthase (347 aa).

Positions 47 and 68 each coordinate iminosuccinate. Position 113 (Cys-113) interacts with [4Fe-4S] cluster. Residues 139 to 141 (YAN) and Ser-156 each bind iminosuccinate. Cys-200 serves as a coordination point for [4Fe-4S] cluster. Iminosuccinate contacts are provided by residues 226–228 (HPE) and Thr-243. Cys-297 contacts [4Fe-4S] cluster.

Belongs to the quinolinate synthase family. Type 1 subfamily. [4Fe-4S] cluster is required as a cofactor.

The protein resides in the cytoplasm. The catalysed reaction is iminosuccinate + dihydroxyacetone phosphate = quinolinate + phosphate + 2 H2O + H(+). It participates in cofactor biosynthesis; NAD(+) biosynthesis; quinolinate from iminoaspartate: step 1/1. Its function is as follows. Catalyzes the condensation of iminoaspartate with dihydroxyacetone phosphate to form quinolinate. The polypeptide is Quinolinate synthase (Salmonella gallinarum (strain 287/91 / NCTC 13346)).